The following is a 205-amino-acid chain: Large ribosomal subunit protein bL9 (205 aa).

The interval 160–205 is disordered; sequence RDRKSRNAAAASEVQDAPVEDGGDEVVSVDSVAAEDGGADASGGTA. Residues 184 to 195 are compositionally biased toward low complexity; that stretch reads EVVSVDSVAAED.

This sequence belongs to the bacterial ribosomal protein bL9 family.

Its function is as follows. Binds to the 23S rRNA. This is Large ribosomal subunit protein bL9 from Anaplasma phagocytophilum (strain HZ).